The following is a 230-amino-acid chain: Cytidylate kinase (230 aa).

12 to 20 (GPSGAGKGT) contacts ATP.

Belongs to the cytidylate kinase family. Type 1 subfamily.

The protein localises to the cytoplasm. It catalyses the reaction CMP + ATP = CDP + ADP. The enzyme catalyses dCMP + ATP = dCDP + ADP. This Yersinia pseudotuberculosis serotype O:1b (strain IP 31758) protein is Cytidylate kinase.